Here is a 738-residue protein sequence, read N- to C-terminus: Interleukin-17 receptor D (738 aa).

The N-terminal stretch at 1-16 (MAPWLQLCSFFFTVNA) is a signal peptide. The Extracellular portion of the chain corresponds to 17 to 299 (CLNGSQLAVA…VQSPWAGPIR (283 aa)). N-linked (GlcNAc...) asparagine glycosylation is found at asparagine 19, asparagine 55, asparagine 62, asparagine 80, asparagine 137, asparagine 171, asparagine 206, and asparagine 277. Residues 300 to 320 (AVAITVPLVVISAFATLFTVM) form a helical membrane-spanning segment. At 321–738 (CRKKQQENIY…TDELQALAPL (418 aa)) the chain is on the cytoplasmic side. Positions 355–509 (QPKVFLCYSN…LMDHLPELCA (155 aa)) constitute an SEFIR domain. The segment at 653 to 738 (GSPSEMPRDS…TDELQALAPL (86 aa)) is disordered. A compositionally biased stretch (low complexity) spans 667-702 (SSVPSSELSLPLMEGLSPDQIETSSLTESVSSSSGL). Positions 720–731 (SREHGCHSHTDE) are enriched in basic and acidic residues.

In terms of assembly, self-associates. Interacts with FGFR2 and phosphorylated MAP2K1 or MAP2K2. Associates with a MAP2K1/2-MAPK1/3 complex. Interacts with FGFR1 and MAP3K7.

The protein resides in the golgi apparatus membrane. Its subcellular location is the cell membrane. In terms of biological role, feedback inhibitor of fibroblast growth factor mediated Ras-MAPK signaling and ERK activation. Regulates the nuclear ERK signaling pathway by spatially blocking nuclear translocation of activated ERK. Mediates JNK activation and may be involved in apoptosis. May inhibit FGF-induced FGFR1 tyrosine phosphorylation. Might have a role in the early stages of fate specification of GnRH-secreting neurons. Inhibits TGFB-induced epithelial-to-mesenchymal transition in lens epithelial cells. This is Interleukin-17 receptor D (Il17rd) from Mus musculus (Mouse).